We begin with the raw amino-acid sequence, 750 residues long: Eukaryotic translation initiation factor 3 subunit B (750 aa).

The RRM domain maps to 42 to 128 (TFVVVDGLPE…HTLRVNKMTD (87 aa)). WD repeat units lie at residues 195–234 (DRQQWTETFVQWSPQGTYLTSVHAQGVLLWGGASWARLRR), 236–292 (PHPF…PLRS), 309–348 (SAKFPWPAFKWSADDKYVARLNQGTSISVYELPKMNLMDK), and 519–562 (LDKK…EKPE).

The protein belongs to the eIF-3 subunit B family. As to quaternary structure, component of the eukaryotic translation initiation factor 3 (eIF-3) complex.

It is found in the cytoplasm. RNA-binding component of the eukaryotic translation initiation factor 3 (eIF-3) complex, which is involved in protein synthesis of a specialized repertoire of mRNAs and, together with other initiation factors, stimulates binding of mRNA and methionyl-tRNAi to the 40S ribosome. The eIF-3 complex specifically targets and initiates translation of a subset of mRNAs involved in cell proliferation. This chain is Eukaryotic translation initiation factor 3 subunit B, found in Chaetomium globosum (strain ATCC 6205 / CBS 148.51 / DSM 1962 / NBRC 6347 / NRRL 1970) (Soil fungus).